Reading from the N-terminus, the 875-residue chain is DNA gyrase subunit A (875 aa).

A Topo IIA-type catalytic domain is found at 34 to 533 (LPDVRDGLKP…NSADINLEDL (500 aa)). The O-(5'-phospho-DNA)-tyrosine intermediate role is filled by Tyr122. A GyrA-box motif is present at residues 560–566 (QRRGGKG). Residues 841 to 875 (EPVDEEDLDTIDGSAAEGDDEIAPEVDVDDEPEEE) form a disordered region. Residues 857–875 (EGDDEIAPEVDVDDEPEEE) are compositionally biased toward acidic residues.

This sequence belongs to the type II topoisomerase GyrA/ParC subunit family. Heterotetramer, composed of two GyrA and two GyrB chains. In the heterotetramer, GyrA contains the active site tyrosine that forms a transient covalent intermediate with DNA, while GyrB binds cofactors and catalyzes ATP hydrolysis.

The protein localises to the cytoplasm. The enzyme catalyses ATP-dependent breakage, passage and rejoining of double-stranded DNA.. A type II topoisomerase that negatively supercoils closed circular double-stranded (ds) DNA in an ATP-dependent manner to modulate DNA topology and maintain chromosomes in an underwound state. Negative supercoiling favors strand separation, and DNA replication, transcription, recombination and repair, all of which involve strand separation. Also able to catalyze the interconversion of other topological isomers of dsDNA rings, including catenanes and knotted rings. Type II topoisomerases break and join 2 DNA strands simultaneously in an ATP-dependent manner. This chain is DNA gyrase subunit A, found in Shigella flexneri.